The sequence spans 365 residues: Neuronal migration protein doublecortin (365 aa).

The segment at 11–31 (RDKTSRNMRGSRMNGLPSPTH) is disordered. T14 carries the post-translational modification Phosphothreonine; by PKC. Phosphoserine; by CDK5 is present on S28. Residue S47 is modified to Phosphoserine; by MARK1 and PKA. Doublecortin domains follow at residues 53-139 (KKVR…VEYT) and 180-263 (KLVT…AQDD). Position 70 is a phosphotyrosine; by ABL (Y70). S74 is subject to Phosphoserine; by PKC. S90 is subject to Phosphoserine; by CK2. A Phosphoserine; by PKC modification is found at S110. S115 carries the phosphoserine; by CK2, MARK1 and PKA modification. A Phosphoserine; by CK2 modification is found at S265. Residues 275 to 365 (KGNPSATAGP…DDSDSLGDSM (91 aa)) are disordered. S287 is subject to Phosphoserine; by CDK5. The residue at position 289 (T289) is a Phosphothreonine; by CDK5. At S294 the chain carries Phosphoserine; by PKC. S297 carries the post-translational modification Phosphoserine; by CDK5. Position 306 is a phosphoserine; by CK2 (S306). Phosphoserine; by DYRK2 is present on S306. Positions 307 to 341 (PADSGNDQDANGTSSSQLSTPKSKQSPISTPTSPG) are enriched in polar residues. Phosphothreonine; by CDK5 is present on T326. T326 is subject to Phosphothreonine; by PKC and MAPK. S332 bears the Phosphoserine; by CDK5 mark. The residue at position 332 (S332) is a Phosphoserine; by MAPK. T336 is subject to Phosphothreonine; by MAPK. S339 carries the post-translational modification Phosphoserine; by CDK5. S339 is subject to Phosphoserine; by MAPK. S342 is modified (phosphoserine; by PKC). 2 positions are modified to phosphoserine; by CK2: S354 and S360. The span at 356–365 (DDSDSLGDSM) shows a compositional bias: acidic residues.

Interacts with tubulin. Interacts with USP9X. Post-translationally, phosphorylation by MARK1, MARK2 and PKA regulates its ability to bind microtubules. Phosphorylation at Ser-265 and Ser-297 seems to occur only in neonatal brain, the levels falling precipitously by postnatal day 21. In terms of processing, ubiquitinated by MDM2, leading to its degradation by the proteasome. Ubiquitinated by MDM2 and subsequent degradation leads to reduce the dendritic spine density of olfactory bulb granule cells. In terms of tissue distribution, highly expressed in neuronal cells of fetal brain (in the majority of cells of the cortical plate, intermediate zone and ventricular zone), but not expressed in other fetal tissues. In the adult, highly expressed in the brain frontal lobe, but very low expression in other regions of brain, and not detected in heart, placenta, lung, liver, skeletal muscles, kidney and pancreas.

It localises to the cytoplasm. The protein localises to the cell projection. The protein resides in the neuron projection. In terms of biological role, microtubule-associated protein required for initial steps of neuronal dispersion and cortex lamination during cerebral cortex development. May act by competing with the putative neuronal protein kinase DCLK1 in binding to a target protein. May in that way participate in a signaling pathway that is crucial for neuronal interaction before and during migration, possibly as part of a calcium ion-dependent signal transduction pathway. May be part with PAFAH1B1/LIS-1 of overlapping, but distinct, signaling pathways that promote neuronal migration. The chain is Neuronal migration protein doublecortin (DCX) from Homo sapiens (Human).